The sequence spans 323 residues: NADH-ubiquinone oxidoreductase chain 1 (323 aa).

The next 8 membrane-spanning stretches (helical) occupy residues 4 to 24, 73 to 93, 106 to 126, 150 to 170, 175 to 195, 226 to 246, 256 to 276, and 303 to 323; these read LFTV…VAFL, YLFF…WNLM, LLLV…SGWA, LALI…TYIM, FSWF…STLA, LFFI…VVIF, LFPL…FLFL, and IGAL…LPLF.

This sequence belongs to the complex I subunit 1 family.

It localises to the mitochondrion inner membrane. It carries out the reaction a ubiquinone + NADH + 5 H(+)(in) = a ubiquinol + NAD(+) + 4 H(+)(out). Functionally, core subunit of the mitochondrial membrane respiratory chain NADH dehydrogenase (Complex I) that is believed to belong to the minimal assembly required for catalysis. Complex I functions in the transfer of electrons from NADH to the respiratory chain. The immediate electron acceptor for the enzyme is believed to be ubiquinone. The polypeptide is NADH-ubiquinone oxidoreductase chain 1 (ND1) (Paracentrotus lividus (Common sea urchin)).